The chain runs to 732 residues: MSEQSKCPVTGRTAGHPVAGGGMSNRDWWPNQLPLDMLHQHSSLVNPMGEAFRYKEEFKKLDLGAVKKDLYALMTDSQEWWPADYGHYGGLFIRMAWHSAGTYRTSDGRGGGGTGNQRFAPLNSWPDNANLDKARRLLWPIKQKYGKMLSWADLMILAGNCALESMGFRTFGFGGGRVDIWEPEEDIYWGKEVEWLGSNRYSGERDLENPLAAVQMGLIYVNPEGPDGNPDPVAAGRDIRETFARMAMNDEETVALVAGGHTFGKCHGVGDPNLIGPEPEAAPIEEQGLGWKSGYGSGKGDETMTSGLEGAWTPDPIHWDMGYLGMLFKYEWELTKSPAGAWQWKPKDVAEEDLAPAAHDPSKRVPTMMTTADLAMRMDPIYGPISRRYYEHPDQFADAFARAWFKLTHRDMGPKSRYLGAEVPAEDLIWQDPVPAVDHELITEGEIAELKMRILASGLPIPELVSTAWASASTFRGSDKRGGANGARIRLAPQKEWEVNQPEQLQRVLHELEKIRDTFNGEQSGGKRVSLADLIVLGGCAAVEEAARRAGHDVTVPFAPGRTDASQAETDVESFAALEPLADGFRNYAKRKYSVTPEEMLIDRSQLLTLTAPEMTVLVGGLRVLGINFRQSPHGVFTRHPETLTNDFFVNLLDMGTEWKPVSHEHDTFEGRDRKTGEPSWSATRVDLIFGSNARLRAIAEVYGSDDAQEKFVHDFVAAWDKVMNLDRFDLS.

The interval 1–23 (MSEQSKCPVTGRTAGHPVAGGGM) is disordered. A cross-link (tryptophyl-tyrosyl-methioninium (Trp-Tyr) (with M-246)) is located at residues 97 to 220 (WHSAGTYRTS…LAAVQMGLIY (124 aa)). Histidine 98 acts as the Proton acceptor in catalysis. Residues 220-246 (YVNPEGPDGNPDPVAAGRDIRETFARM) constitute a cross-link (tryptophyl-tyrosyl-methioninium (Tyr-Met) (with W-97)). Histidine 261 lines the heme b pocket.

Belongs to the peroxidase family. Peroxidase/catalase subfamily. In terms of assembly, homodimer or homotetramer. Heme b serves as cofactor. In terms of processing, formation of the three residue Trp-Tyr-Met cross-link is important for the catalase, but not the peroxidase activity of the enzyme.

It carries out the reaction H2O2 + AH2 = A + 2 H2O. The catalysed reaction is 2 H2O2 = O2 + 2 H2O. Functionally, bifunctional enzyme with both catalase and broad-spectrum peroxidase activity. The protein is Catalase-peroxidase of Chlorobium limicola (strain DSM 245 / NBRC 103803 / 6330).